A 128-amino-acid polypeptide reads, in one-letter code: Sulfurtransferase TusD (128 aa).

The Cysteine persulfide intermediate role is filled by C78.

The protein belongs to the DsrE/TusD family. Heterohexamer, formed by a dimer of trimers. The hexameric TusBCD complex contains 2 copies each of TusB, TusC and TusD. The TusBCD complex interacts with TusE.

Its subcellular location is the cytoplasm. Part of a sulfur-relay system required for 2-thiolation of 5-methylaminomethyl-2-thiouridine (mnm(5)s(2)U) at tRNA wobble positions. Accepts sulfur from TusA and transfers it in turn to TusE. In Escherichia coli O157:H7, this protein is Sulfurtransferase TusD.